The following is a 237-amino-acid chain: CDP-diacylglycerol--serine O-phosphatidyltransferase (237 aa).

Transmembrane regions (helical) follow at residues 3–23 (INPL…LGMM), 25–45 (IFYA…ASLI), 73–93 (VVAF…YNFG), 95–115 (IGMA…ARFN), 124–144 (YSFI…CVLL), 150–170 (FLEG…GVLM), 184–204 (WNLK…VRPL), and 207–227 (LSVF…FLMV).

Belongs to the CDP-alcohol phosphatidyltransferase class-I family.

It is found in the cell membrane. It carries out the reaction a CDP-1,2-diacyl-sn-glycerol + L-serine = a 1,2-diacyl-sn-glycero-3-phospho-L-serine + CMP + H(+). The protein is CDP-diacylglycerol--serine O-phosphatidyltransferase (pssA) of Helicobacter pylori (strain J99 / ATCC 700824) (Campylobacter pylori J99).